A 412-amino-acid chain; its full sequence is Argininosuccinate synthase (412 aa).

10-18 serves as a coordination point for ATP; that stretch reads AYSGGLDTS. An L-citrulline-binding site is contributed by tyrosine 89. Glycine 119 provides a ligand contact to ATP. 3 residues coordinate L-aspartate: threonine 121, asparagine 125, and aspartate 126. Residue asparagine 125 participates in L-citrulline binding. The L-citrulline site is built by arginine 129, serine 177, glutamate 261, and tyrosine 273.

It belongs to the argininosuccinate synthase family. Type 1 subfamily. Homotetramer.

It is found in the cytoplasm. It catalyses the reaction L-citrulline + L-aspartate + ATP = 2-(N(omega)-L-arginino)succinate + AMP + diphosphate + H(+). The protein operates within amino-acid biosynthesis; L-arginine biosynthesis; L-arginine from L-ornithine and carbamoyl phosphate: step 2/3. This is Argininosuccinate synthase from Bifidobacterium longum (strain NCC 2705).